A 217-amino-acid chain; its full sequence is Phosphate-specific transport system accessory protein PhoU homolog 2 (217 aa).

This sequence belongs to the PhoU family. As to quaternary structure, homodimer.

The protein resides in the cytoplasm. Its function is as follows. Plays a role in the regulation of phosphate uptake. This is Phosphate-specific transport system accessory protein PhoU homolog 2 from Methanothermobacter thermautotrophicus (strain ATCC 29096 / DSM 1053 / JCM 10044 / NBRC 100330 / Delta H) (Methanobacterium thermoautotrophicum).